We begin with the raw amino-acid sequence, 312 residues long: Ribosomal RNA small subunit methyltransferase H (312 aa).

S-adenosyl-L-methionine contacts are provided by residues 35-37 (GGH), D55, F79, D101, and Q108.

This sequence belongs to the methyltransferase superfamily. RsmH family.

It localises to the cytoplasm. The catalysed reaction is cytidine(1402) in 16S rRNA + S-adenosyl-L-methionine = N(4)-methylcytidine(1402) in 16S rRNA + S-adenosyl-L-homocysteine + H(+). Specifically methylates the N4 position of cytidine in position 1402 (C1402) of 16S rRNA. The polypeptide is Ribosomal RNA small subunit methyltransferase H (Glaesserella parasuis serovar 5 (strain SH0165) (Haemophilus parasuis)).